The chain runs to 72 residues: Translational regulator CsrA (72 aa).

The protein belongs to the CsrA/RsmA family. In terms of assembly, homodimer; the beta-strands of each monomer intercalate to form a hydrophobic core, while the alpha-helices form wings that extend away from the core.

The protein localises to the cytoplasm. Its function is as follows. A translational regulator that binds mRNA to regulate translation initiation and/or mRNA stability. Usually binds in the 5'-UTR at or near the Shine-Dalgarno sequence preventing ribosome-binding, thus repressing translation. Its main target seems to be the major flagellin gene, while its function is anatagonized by FliW. This Ruminiclostridium cellulolyticum (strain ATCC 35319 / DSM 5812 / JCM 6584 / H10) (Clostridium cellulolyticum) protein is Translational regulator CsrA.